The sequence spans 133 residues: Profilin-1 (133 aa).

It belongs to the profilin family. Occurs in many kinds of cells as a complex with monomeric actin in a 1:1 ratio. Ubiquitous.

It is found in the cytoplasm. Its subcellular location is the cytoskeleton. Binds to actin and affects the structure of the cytoskeleton. At high concentrations, profilin prevents the polymerization of actin, whereas it enhances it at low concentrations. By binding to PIP2, it inhibits the formation of IP3 and DG. In Solanum lycopersicum (Tomato), this protein is Profilin-1 (PRO1).